The primary structure comprises 427 residues: Glutamate-1-semialdehyde 2,1-aminomutase (427 aa).

Position 265 is an N6-(pyridoxal phosphate)lysine (K265).

It belongs to the class-III pyridoxal-phosphate-dependent aminotransferase family. HemL subfamily. Homodimer. Pyridoxal 5'-phosphate is required as a cofactor.

Its subcellular location is the cytoplasm. It carries out the reaction (S)-4-amino-5-oxopentanoate = 5-aminolevulinate. It functions in the pathway porphyrin-containing compound metabolism; protoporphyrin-IX biosynthesis; 5-aminolevulinate from L-glutamyl-tRNA(Glu): step 2/2. The protein is Glutamate-1-semialdehyde 2,1-aminomutase of Pseudomonas aeruginosa (strain UCBPP-PA14).